Reading from the N-terminus, the 186-residue chain is MKIAQELRSGNVFMLDGQPMVVQKTEYNKSGRNAAVVKMKMKNLLTGSASEAVYKADEKFDIVVLDKKECTYSYFADPMYVFMDGEFNQYEVEAENMEDVLPFLEDGMTDPCEVVFYEGRAISVELPTTVVREVEYTEPAVRGDTSGKVLKPARLHNGTVIQVAAFVEIGDKIEIDTRTSEFKKRA.

Belongs to the elongation factor P family.

The protein resides in the cytoplasm. The protein operates within protein biosynthesis; polypeptide chain elongation. Its function is as follows. Involved in peptide bond synthesis. Stimulates efficient translation and peptide-bond synthesis on native or reconstituted 70S ribosomes in vitro. Probably functions indirectly by altering the affinity of the ribosome for aminoacyl-tRNA, thus increasing their reactivity as acceptors for peptidyl transferase. The sequence is that of Elongation factor P from Laribacter hongkongensis (strain HLHK9).